The chain runs to 101 residues: Small ribosomal subunit protein uS14 (101 aa).

It belongs to the universal ribosomal protein uS14 family. As to quaternary structure, part of the 30S ribosomal subunit. Contacts proteins S3 and S10.

Its function is as follows. Binds 16S rRNA, required for the assembly of 30S particles and may also be responsible for determining the conformation of the 16S rRNA at the A site. In Chlamydia pneumoniae (Chlamydophila pneumoniae), this protein is Small ribosomal subunit protein uS14.